A 932-amino-acid polypeptide reads, in one-letter code: UPF0182 protein Amet_0022 (932 aa).

7 helical membrane-spanning segments follow: residues 14-34 (VIIGLGIFIFIFLFGFLSEIL), 60-80 (LQIGIPLFIVGTILYYLYLIG), 104-124 (ILILPAFVFGLMTSTSVAGSL), 166-186 (TSILFLMVIITVIFYVIMFLI), 208-228 (LLQIALKQFAALGVIFFLVLA), 256-276 (VTLWVYRAQILASLLSATGVV), and 286-306 (LLLIAPISIIAVGILGNVISL).

This sequence belongs to the UPF0182 family.

Its subcellular location is the cell membrane. The chain is UPF0182 protein Amet_0022 from Alkaliphilus metalliredigens (strain QYMF).